Here is a 616-residue protein sequence, read N- to C-terminus: Elongation factor 4 (616 aa).

The region spanning E17–V203 is the tr-type G domain. GTP contacts are provided by residues D29–T34 and N150–D153.

The protein belongs to the TRAFAC class translation factor GTPase superfamily. Classic translation factor GTPase family. LepA subfamily.

The protein localises to the cell membrane. The catalysed reaction is GTP + H2O = GDP + phosphate + H(+). Its function is as follows. Required for accurate and efficient protein synthesis under certain stress conditions. May act as a fidelity factor of the translation reaction, by catalyzing a one-codon backward translocation of tRNAs on improperly translocated ribosomes. Back-translocation proceeds from a post-translocation (POST) complex to a pre-translocation (PRE) complex, thus giving elongation factor G a second chance to translocate the tRNAs correctly. Binds to ribosomes in a GTP-dependent manner. In Corynebacterium jeikeium (strain K411), this protein is Elongation factor 4.